Here is a 774-residue protein sequence, read N- to C-terminus: Shugoshin (774 aa).

Residues 41–105 adopt a coiled-coil conformation; sequence SLRIRGLENE…AELSSLLASL (65 aa). 3 disordered regions span residues 106–151, 205–661, and 676–774; these read GEPP…QEGR, SPSP…DAQL, and CASP…SMML. The segment covering 109-120 has biased composition (basic and acidic residues); the sequence is PSKRRLSEERRY. Acidic residues predominate over residues 214-224; it reads AEETETTEQVE. A compositionally biased stretch (polar residues) spans 297–318; the sequence is GDNQNEPNKATKLQQGKENGNE. A compositionally biased stretch (basic and acidic residues) spans 382–398; sequence KGKEKVDLPAPDKKSAV. The segment covering 399 to 409 has biased composition (polar residues); that stretch reads EETQGNSTSAF. Basic and acidic residues-rich tracts occupy residues 482 to 495 and 549 to 558; these read NLRDKMRRPTKELF and FEKEKEKEPQ. 2 stretches are compositionally biased toward polar residues: residues 595 to 604 and 640 to 651; these read PSVQEQSTLN and QSMSRSVPTIPT. Positions 706 to 722 are enriched in low complexity; that stretch reads ASSAASTETTATASAKP. A compositionally biased stretch (acidic residues) spans 743–754; it reads LAQEEEDEEDVG. Positions 765 to 774 are enriched in basic residues; sequence RASRRRSMML.

Belongs to the shugoshin family.

Its subcellular location is the nucleus. The protein resides in the chromosome. It is found in the centromere. Functionally, plays a central role in chromosome cohesion during cell division by preventing premature dissociation of cohesin complex from centromeres after prophase, when most of cohesin complex dissociates from chromosomes arms. The chain is Shugoshin (sgo-1) from Neurospora crassa (strain ATCC 24698 / 74-OR23-1A / CBS 708.71 / DSM 1257 / FGSC 987).